The following is a 139-amino-acid chain: GPI-anchored protein 53 (139 aa).

An N-terminal signal peptide occupies residues 1-17 (MKFQLLTLVSIATTTLA). Composition is skewed to low complexity over residues 57–69 (TITS…TTTT) and 77–101 (TSTT…SSSS). The disordered stretch occupies residues 57 to 115 (TITSSSSTTTTTTAKKDKKTTSTTSASSTTTTSTKSNSTSPSSSSSKKHKSETASITKT). N93 is a glycosylation site (N-linked (GlcNAc...) asparagine). G116 carries the GPI-anchor amidated glycine lipid modification. A propeptide spans 117-139 (GADSVAAAAAVGGPILAALALLL) (removed in mature form).

The protein resides in the cell membrane. The protein is GPI-anchored protein 53 (PGA53) of Candida albicans (strain SC5314 / ATCC MYA-2876) (Yeast).